Consider the following 251-residue polypeptide: Imidazole glycerol phosphate synthase subunit HisF (251 aa).

Residues aspartate 13 and aspartate 132 contribute to the active site.

Belongs to the HisA/HisF family. Heterodimer of HisH and HisF.

It localises to the cytoplasm. The enzyme catalyses 5-[(5-phospho-1-deoxy-D-ribulos-1-ylimino)methylamino]-1-(5-phospho-beta-D-ribosyl)imidazole-4-carboxamide + L-glutamine = D-erythro-1-(imidazol-4-yl)glycerol 3-phosphate + 5-amino-1-(5-phospho-beta-D-ribosyl)imidazole-4-carboxamide + L-glutamate + H(+). Its pathway is amino-acid biosynthesis; L-histidine biosynthesis; L-histidine from 5-phospho-alpha-D-ribose 1-diphosphate: step 5/9. Functionally, IGPS catalyzes the conversion of PRFAR and glutamine to IGP, AICAR and glutamate. The HisF subunit catalyzes the cyclization activity that produces IGP and AICAR from PRFAR using the ammonia provided by the HisH subunit. The sequence is that of Imidazole glycerol phosphate synthase subunit HisF from Campylobacter concisus (strain 13826).